The chain runs to 375 residues: Succinyl-diaminopimelate desuccinylase (375 aa).

His-66 is a binding site for Zn(2+). Residue Asp-68 is part of the active site. Asp-99 contributes to the Zn(2+) binding site. The active-site Proton acceptor is Glu-133. Residues Glu-134, Glu-162, and His-348 each contribute to the Zn(2+) site.

It belongs to the peptidase M20A family. DapE subfamily. As to quaternary structure, homodimer. Zn(2+) serves as cofactor. Requires Co(2+) as cofactor.

The catalysed reaction is N-succinyl-(2S,6S)-2,6-diaminopimelate + H2O = (2S,6S)-2,6-diaminopimelate + succinate. It functions in the pathway amino-acid biosynthesis; L-lysine biosynthesis via DAP pathway; LL-2,6-diaminopimelate from (S)-tetrahydrodipicolinate (succinylase route): step 3/3. Its function is as follows. Catalyzes the hydrolysis of N-succinyl-L,L-diaminopimelic acid (SDAP), forming succinate and LL-2,6-diaminopimelate (DAP), an intermediate involved in the bacterial biosynthesis of lysine and meso-diaminopimelic acid, an essential component of bacterial cell walls. This is Succinyl-diaminopimelate desuccinylase from Salmonella typhi.